A 353-amino-acid polypeptide reads, in one-letter code: Protein-glutamate methylesterase/protein-glutamine glutaminase 3 (353 aa).

The Response regulatory domain occupies Lys3–Ala120. Asp54 carries the 4-aspartylphosphate modification. The CheB-type methylesterase domain maps to Pro158–Arg353. Active-site residues include Ser173, His200, and Asp296.

Belongs to the CheB family. Phosphorylated by CheA. Phosphorylation of the N-terminal regulatory domain activates the methylesterase activity.

It is found in the cytoplasm. It catalyses the reaction [protein]-L-glutamate 5-O-methyl ester + H2O = L-glutamyl-[protein] + methanol + H(+). The catalysed reaction is L-glutaminyl-[protein] + H2O = L-glutamyl-[protein] + NH4(+). Its function is as follows. Involved in chemotaxis. Part of a chemotaxis signal transduction system that modulates chemotaxis in response to various stimuli. Catalyzes the demethylation of specific methylglutamate residues introduced into the chemoreceptors (methyl-accepting chemotaxis proteins or MCP) by CheR. Also mediates the irreversible deamidation of specific glutamine residues to glutamic acid. The chain is Protein-glutamate methylesterase/protein-glutamine glutaminase 3 from Syntrophomonas wolfei subsp. wolfei (strain DSM 2245B / Goettingen).